A 309-amino-acid chain; its full sequence is NAD kinase (309 aa).

The Proton acceptor role is filled by D89. NAD(+) contacts are provided by residues 89-90 (DG), 163-164 (NE), R191, D193, and 204-209 (TAYSLS).

It belongs to the NAD kinase family. Requires a divalent metal cation as cofactor.

It localises to the cytoplasm. It carries out the reaction NAD(+) + ATP = ADP + NADP(+) + H(+). Its function is as follows. Involved in the regulation of the intracellular balance of NAD and NADP, and is a key enzyme in the biosynthesis of NADP. Catalyzes specifically the phosphorylation on 2'-hydroxyl of the adenosine moiety of NAD to yield NADP. The sequence is that of NAD kinase from Shewanella halifaxensis (strain HAW-EB4).